The chain runs to 367 residues: 5-amino-6-(D-ribitylamino)uracil--L-tyrosine 4-hydroxyphenyl transferase (367 aa).

The Radical SAM core domain occupies 54–288 (ITYIENWNIN…VYAISRLMFR (235 aa)). 3 residues coordinate [4Fe-4S] cluster: cysteine 68, cysteine 72, and cysteine 75.

It belongs to the radical SAM superfamily. CofH family. As to quaternary structure, consists of two subunits, CofG and CofH. Requires [4Fe-4S] cluster as cofactor.

It carries out the reaction 5-amino-6-(D-ribitylamino)uracil + L-tyrosine + S-adenosyl-L-methionine = 5-amino-5-(4-hydroxybenzyl)-6-(D-ribitylimino)-5,6-dihydrouracil + 2-iminoacetate + 5'-deoxyadenosine + L-methionine + H(+). The protein operates within cofactor biosynthesis; coenzyme F0 biosynthesis. Its function is as follows. Catalyzes the radical-mediated synthesis of 5-amino-5-(4-hydroxybenzyl)-6-(D-ribitylimino)-5,6-dihydrouracil from 5-amino-6-(D-ribitylamino)uracil and L-tyrosine. This is 5-amino-6-(D-ribitylamino)uracil--L-tyrosine 4-hydroxyphenyl transferase from Methanothermobacter thermautotrophicus (strain ATCC 29096 / DSM 1053 / JCM 10044 / NBRC 100330 / Delta H) (Methanobacterium thermoautotrophicum).